The primary structure comprises 122 residues: ATP synthase epsilon chain (122 aa).

The protein belongs to the ATPase epsilon chain family. F-type ATPases have 2 components, CF(1) - the catalytic core - and CF(0) - the membrane proton channel. CF(1) has five subunits: alpha(3), beta(3), gamma(1), delta(1), epsilon(1). CF(0) has three main subunits: a, b and c.

It is found in the cell membrane. Its function is as follows. Produces ATP from ADP in the presence of a proton gradient across the membrane. The protein is ATP synthase epsilon chain of Rhodococcus opacus (strain B4).